A 422-amino-acid polypeptide reads, in one-letter code: Cytochrome P450-pinF1, plant-inducible (422 aa).

C369 is a binding site for heme.

This sequence belongs to the cytochrome P450 family. Heme serves as cofactor.

Functionally, not essential for virulence, but may be involved in the detoxification of plant protective agents at the site of wounding. In Rhizobium radiobacter (Agrobacterium tumefaciens), this protein is Cytochrome P450-pinF1, plant-inducible (cyp103).